A 364-amino-acid chain; its full sequence is 3'(2'),5'-bisphosphate nucleotidase 1 (364 aa).

Asp54 acts as the Proton acceptor in catalysis. 4 residues coordinate Mg(2+): Glu77, Asp141, Ile143, and Asp144. Thr146 functions as the Proton acceptor in the catalytic mechanism. Adenosine 3',5'-bisphosphate-binding residues include Thr146, His243, Ser272, Lys275, Arg289, and Asp302. 5 residues coordinate AMP: His243, Ser272, Lys275, Arg289, and Asp302. Mg(2+) is bound at residue Asp302.

This sequence belongs to the inositol monophosphatase superfamily. Mg(2+) serves as cofactor.

It catalyses the reaction 3'-phosphoadenylyl sulfate + H2O = adenosine 5'-phosphosulfate + phosphate. It carries out the reaction adenosine 3',5'-bisphosphate + H2O = AMP + phosphate. The catalysed reaction is adenosine 2',5'-bisphosphate + H2O = AMP + phosphate. Phosphatase that converts adenosine 3'-phosphate 5'-phosphosulfate (PAPS) to adenosine 5'-phosphosulfate (APS) and 3'(2')-phosphoadenosine 5'-phosphate (PAP) to AMP. Regulates the flux of sulfur in the sulfur-activation pathway by converting PAPS to APS. Involved in salt tolerance. The polypeptide is 3'(2'),5'-bisphosphate nucleotidase 1 (HAL21) (Candida albicans (strain SC5314 / ATCC MYA-2876) (Yeast)).